A 186-amino-acid chain; its full sequence is Ribosome-recycling factor (186 aa).

This sequence belongs to the RRF family.

Its subcellular location is the cytoplasm. Responsible for the release of ribosomes from messenger RNA at the termination of protein biosynthesis. May increase the efficiency of translation by recycling ribosomes from one round of translation to another. This chain is Ribosome-recycling factor, found in Endomicrobium trichonymphae.